The primary structure comprises 123 residues: Large ribosomal subunit protein uL14 (123 aa).

It belongs to the universal ribosomal protein uL14 family. As to quaternary structure, part of the 50S ribosomal subunit. Forms a cluster with proteins L3 and L19. In the 70S ribosome, L14 and L19 interact and together make contacts with the 16S rRNA in bridges B5 and B8.

Functionally, binds to 23S rRNA. Forms part of two intersubunit bridges in the 70S ribosome. The protein is Large ribosomal subunit protein uL14 of Corynebacterium jeikeium (strain K411).